Consider the following 753-residue polypeptide: Nigerose phosphorylase (753 aa).

Residue 348 to 349 (WD) participates in substrate binding. The active-site Proton donor is E490. 604-605 (KQ) provides a ligand contact to substrate.

Belongs to the glycosyl hydrolase 65 family. In terms of assembly, homodimer.

The protein resides in the cytoplasm. The catalysed reaction is nigerose + phosphate = beta-D-glucose 1-phosphate + D-glucose. With respect to regulation, does not require divalent metal ions. Catalyzes the reversible phosphorolysis of nigerose. Also shows a weak activity on kojibiose. This Lachnoclostridium phytofermentans (strain ATCC 700394 / DSM 18823 / ISDg) (Clostridium phytofermentans) protein is Nigerose phosphorylase.